Here is a 1121-residue protein sequence, read N- to C-terminus: Cilia- and flagella-associated protein 70 (1121 aa).

The segment covering Asn-410–Pro-428 has biased composition (basic and acidic residues). Residues Asn-410–Gly-457 form a disordered region. TPR repeat units follow at residues Ser-635–Asn-668, Leu-669–His-702, and His-704–Asn-736. Disordered stretches follow at residues Lys-778–Ile-802 and Gln-836–Ser-858. 5 TPR repeats span residues Cys-929–Asn-962, Pro-963–Ala-996, His-1000–Cys-1033, Thr-1035–Asn-1066, and Glu-1068–Asp-1100.

This sequence belongs to the CFAP70 family. As to expression, expressed in testis.

It localises to the cell projection. The protein resides in the cilium. The protein localises to the flagellum. Its subcellular location is the cytoplasm. It is found in the cytoskeleton. It localises to the flagellum basal body. The protein resides in the cilium axoneme. Its function is as follows. Axoneme-binding protein that plays a role in the regulation of ciliary motility and cilium length. The sequence is that of Cilia- and flagella-associated protein 70 from Homo sapiens (Human).